Reading from the N-terminus, the 292-residue chain is Elongation factor Ts (292 aa).

Residues 79–82 (TDFV) form an involved in Mg(2+) ion dislocation from EF-Tu region.

This sequence belongs to the EF-Ts family.

The protein resides in the cytoplasm. Functionally, associates with the EF-Tu.GDP complex and induces the exchange of GDP to GTP. It remains bound to the aminoacyl-tRNA.EF-Tu.GTP complex up to the GTP hydrolysis stage on the ribosome. The polypeptide is Elongation factor Ts (Xanthomonas euvesicatoria pv. vesicatoria (strain 85-10) (Xanthomonas campestris pv. vesicatoria)).